Consider the following 553-residue polypeptide: Solute carrier family 45 member 3 (553 aa).

The next 11 helical transmembrane spans lie at 19–39 (LLVN…ITYV), 52–72 (FMTM…PLLG), 88–108 (FIWA…RAGW), 120–140 (LELA…QVCF), 161–181 (YSVY…LPAI), 198–218 (CLFG…LLVA), 275–295 (FVAE…YTDF), 323–343 (MGSL…LVMD), 353–373 (AVYL…CLSH), 382–402 (AALT…LASL), and 522–542 (AYMV…TQVV).

It belongs to the glycoside-pentoside-hexuronide (GPH) cation symporter transporter (TC 2.A.2) family. Prostate specific. Expressed in all prostatic glandular cells. Expressed both in normal and cancerous prostates.

It localises to the membrane. It carries out the reaction sucrose(out) + H(+)(out) = sucrose(in) + H(+)(in). Proton-associated sucrose transporter. May be able to transport also glucose and fructose. The sequence is that of Solute carrier family 45 member 3 from Homo sapiens (Human).